The sequence spans 681 residues: UvrABC system protein B (681 aa).

The region spanning 30 to 419 is the Helicase ATP-binding domain; sequence QGVRDGRHWQ…GEVVELLVRP (390 aa). 43–50 provides a ligand contact to ATP; it reads GVTGSGKT. A Beta-hairpin motif is present at residues 96 to 119; the sequence is YYDFYQPEAYLPSLDKYIAKDLRI. The region spanning 435 to 601 is the Helicase C-terminal domain; sequence QIDNLLAEIR…SIVKSVDQIL (167 aa). Positions 641–676 constitute a UVR domain; it reads YAIVEGLRLEMQEAAEHMEYEKAAYLRDEITKMEQV.

The protein belongs to the UvrB family. In terms of assembly, forms a heterotetramer with UvrA during the search for lesions. Interacts with UvrC in an incision complex.

It localises to the cytoplasm. Its function is as follows. The UvrABC repair system catalyzes the recognition and processing of DNA lesions. A damage recognition complex composed of 2 UvrA and 2 UvrB subunits scans DNA for abnormalities. Upon binding of the UvrA(2)B(2) complex to a putative damaged site, the DNA wraps around one UvrB monomer. DNA wrap is dependent on ATP binding by UvrB and probably causes local melting of the DNA helix, facilitating insertion of UvrB beta-hairpin between the DNA strands. Then UvrB probes one DNA strand for the presence of a lesion. If a lesion is found the UvrA subunits dissociate and the UvrB-DNA preincision complex is formed. This complex is subsequently bound by UvrC and the second UvrB is released. If no lesion is found, the DNA wraps around the other UvrB subunit that will check the other stand for damage. The polypeptide is UvrABC system protein B (Chlorobium chlorochromatii (strain CaD3)).